We begin with the raw amino-acid sequence, 439 residues long: Acyl-coenzyme A thioesterase 10, mitochondrial (439 aa).

The transit peptide at 1–21 directs the protein to the mitochondrion; sequence MKRAAMRLWTLNKGLLTHGRG. HotDog ACOT-type domains lie at 85 to 209 and 289 to 401; these read SYIE…QDSE and EDTK…EKEV.

Belongs to the acyl coenzyme A hydrolase family.

The protein resides in the mitochondrion. In terms of biological role, catalyzes the hydrolysis of acyl-CoAs into free fatty acids and coenzyme A (CoASH), regulating their respective intracellular levels. Active on long chain acyl-CoAs. This is Acyl-coenzyme A thioesterase 10, mitochondrial from Mus musculus (Mouse).